The primary structure comprises 340 residues: MTNKNAYAQSGVDVEAGYEVVERIKKHVARTERAGVMGALGGFGGMFDLSKTGVKEPVLISGTDGVGTKLMLAIKYDKHDTIGQDCVAMCVNDIIAAGAEPLYFLDYVATXKNEPAKLEQVVAGVAEGCVQAGAALIGGETAEMPGMYGEDDYDLAGFAVGVAEKSQIIDGSKVVEGDVLLGLVSSGIHSNGYSLVRRVFADYTGEEVLPELEGKKLKEVLLEPTRIYVKAVLPLIKEELVNGIAHITGGGFIENVPRMFADDLAAEIDESKVPVLPIFKALEKYGQIKHEEMFEIFNMGVGLMLAVSPENVERVKELLDEAVYEIGRIVKKENESVIIK.

It belongs to the AIR synthase family.

The protein resides in the cytoplasm. It catalyses the reaction 2-formamido-N(1)-(5-O-phospho-beta-D-ribosyl)acetamidine + ATP = 5-amino-1-(5-phospho-beta-D-ribosyl)imidazole + ADP + phosphate + H(+). It functions in the pathway purine metabolism; IMP biosynthesis via de novo pathway; 5-amino-1-(5-phospho-D-ribosyl)imidazole from N(2)-formyl-N(1)-(5-phospho-D-ribosyl)glycinamide: step 2/2. This is Phosphoribosylformylglycinamidine cyclo-ligase from Streptococcus pneumoniae serotype 19F (strain G54).